The primary structure comprises 170 residues: Lipoprotein signal peptidase (170 aa).

Helical transmembrane passes span 11–31 (LGWLVLSLLVLVIDQVSKAHF), 41–61 (IVVIPDYFSWTLAYNTGAAFS), 69–89 (WQRWLFAVIAVVVSAVLVVWL), and 95–115 (DDTWLAIALALVLGGALGNLY). Catalysis depends on residues Asp-125 and Asp-144. The helical transmembrane segment at 136-156 (YFPAFNFADSAITVGAIMLAL) threads the bilayer.

This sequence belongs to the peptidase A8 family.

Its subcellular location is the cell inner membrane. It carries out the reaction Release of signal peptides from bacterial membrane prolipoproteins. Hydrolyzes -Xaa-Yaa-Zaa-|-(S,diacylglyceryl)Cys-, in which Xaa is hydrophobic (preferably Leu), and Yaa (Ala or Ser) and Zaa (Gly or Ala) have small, neutral side chains.. Its pathway is protein modification; lipoprotein biosynthesis (signal peptide cleavage). Its function is as follows. This protein specifically catalyzes the removal of signal peptides from prolipoproteins. In Pseudomonas fluorescens, this protein is Lipoprotein signal peptidase.